The following is a 2276-amino-acid chain: Protein Ycf2 (2276 aa).

1621 to 1628 (GSIGTGRS) lines the ATP pocket.

The protein belongs to the Ycf2 family.

The protein localises to the plastid. Its subcellular location is the chloroplast stroma. Functionally, probable ATPase of unknown function. Its presence in a non-photosynthetic plant (Epifagus virginiana) and experiments in tobacco indicate that it has an essential function which is probably not related to photosynthesis. The polypeptide is Protein Ycf2 (Guizotia abyssinica (Niger)).